Here is a 131-residue protein sequence, read N- to C-terminus: ATP synthase epsilon chain (131 aa).

Belongs to the ATPase epsilon chain family. In terms of assembly, F-type ATPases have 2 components, CF(1) - the catalytic core - and CF(0) - the membrane proton channel. CF(1) has five subunits: alpha(3), beta(3), gamma(1), delta(1), epsilon(1). CF(0) has three main subunits: a, b and c.

The protein localises to the cell membrane. Functionally, produces ATP from ADP in the presence of a proton gradient across the membrane. The chain is ATP synthase epsilon chain from Bacillus licheniformis (strain ATCC 14580 / DSM 13 / JCM 2505 / CCUG 7422 / NBRC 12200 / NCIMB 9375 / NCTC 10341 / NRRL NRS-1264 / Gibson 46).